The chain runs to 588 residues: Aspartate--tRNA ligase (588 aa).

Glu-177 contacts L-aspartate. The tract at residues 201–204 is aspartate; sequence QLFK. Residue Arg-223 coordinates L-aspartate. Residues 223 to 225 and Gln-232 contribute to the ATP site; that span reads RDE. His-451 is a binding site for L-aspartate. An ATP-binding site is contributed by Glu-485. Arg-492 provides a ligand contact to L-aspartate. Residue 537 to 540 participates in ATP binding; it reads GLDR.

It belongs to the class-II aminoacyl-tRNA synthetase family. Type 1 subfamily. In terms of assembly, homodimer.

The protein resides in the cytoplasm. The catalysed reaction is tRNA(Asp) + L-aspartate + ATP = L-aspartyl-tRNA(Asp) + AMP + diphosphate. Catalyzes the attachment of L-aspartate to tRNA(Asp) in a two-step reaction: L-aspartate is first activated by ATP to form Asp-AMP and then transferred to the acceptor end of tRNA(Asp). The protein is Aspartate--tRNA ligase of Staphylococcus aureus (strain Newman).